The sequence spans 402 residues: uncharacterized protein (402 aa).

12 helical membrane passes run 26-46, 67-87, 96-116, 126-146, 168-188, 213-233, 235-255, 289-309, 312-332, 338-358, 360-380, and 381-401; these read IFMS…AIAY, VALA…YVGF, FAAF…LTII, TVSI…NGTL, LFIL…IGFL, YVAY…MIDS, LFLL…GGYG, PIVI…GSII, ISVF…FDSL, FKNI…AVTI, FALL…SFLL, and LYKK…GYLI.

Belongs to the chromate ion transporter (CHR) (TC 2.A.51) family.

The protein resides in the cell membrane. This is an uncharacterized protein from Methanocaldococcus jannaschii (strain ATCC 43067 / DSM 2661 / JAL-1 / JCM 10045 / NBRC 100440) (Methanococcus jannaschii).